The primary structure comprises 74 residues: Acyl carrier protein (74 aa).

The Carrier domain occupies 1–73; it reads MAVFEKVQEI…DLVAYVEEQA (73 aa). Residue Ser-35 is modified to O-(pantetheine 4'-phosphoryl)serine.

Belongs to the acyl carrier protein (ACP) family. In terms of processing, 4'-phosphopantetheine is transferred from CoA to a specific serine of apo-ACP by AcpS. This modification is essential for activity because fatty acids are bound in thioester linkage to the sulfhydryl of the prosthetic group.

The protein localises to the cytoplasm. Its pathway is lipid metabolism; fatty acid biosynthesis. In terms of biological role, carrier of the growing fatty acid chain in fatty acid biosynthesis. The polypeptide is Acyl carrier protein (Streptococcus pneumoniae serotype 4 (strain ATCC BAA-334 / TIGR4)).